We begin with the raw amino-acid sequence, 352 residues long: Ketol-acid reductoisomerase (NAD(+)) (352 aa).

Residues 11–199 enclose the KARI N-terminal Rossmann domain; the sequence is ENVVTSEEFT…AIGSGYLFPT (189 aa). NAD(+) contacts are provided by residues 38-41 and 100-103; these read YGVQ and DAGQ. The active site involves H124. G153 provides a ligand contact to NAD(+). The KARI C-terminal knotted domain occupies 200-347; the sequence is TFEKEVFSDL…AAVRALRPEN (148 aa). The Mg(2+) site is built by D208, E212, E244, and E248. Substrate is bound at residue S270.

This sequence belongs to the ketol-acid reductoisomerase family. The cofactor is Mg(2+).

The catalysed reaction is (2R)-2,3-dihydroxy-3-methylbutanoate + NAD(+) = (2S)-2-acetolactate + NADH + H(+). Its pathway is amino-acid biosynthesis; L-isoleucine biosynthesis; L-isoleucine from 2-oxobutanoate: step 2/4. The protein operates within amino-acid biosynthesis; L-valine biosynthesis; L-valine from pyruvate: step 2/4. Functionally, involved in the biosynthesis of branched-chain amino acids (BCAA). Catalyzes an alkyl-migration followed by a ketol-acid reduction of (S)-2-acetolactate (S2AL) to yield (R)-2,3-dihydroxy-isovalerate. In the isomerase reaction, S2AL is rearranged via a Mg-dependent methyl migration to produce 3-hydroxy-3-methyl-2-ketobutyrate (HMKB). In the reductase reaction, this 2-ketoacid undergoes a metal-dependent reduction by NADH to yield (R)-2,3-dihydroxy-isovalerate. The protein is Ketol-acid reductoisomerase (NAD(+)) of Desulfosudis oleivorans (strain DSM 6200 / JCM 39069 / Hxd3) (Desulfococcus oleovorans).